A 344-amino-acid polypeptide reads, in one-letter code: Fibronectin type 3 and ankyrin repeat domains 1 protein (344 aa).

Positions 11-108 constitute a Fibronectin type-III domain; the sequence is KPHPPVVGKV…VVSVATTREP (98 aa). ANK repeat units lie at residues 109–139, 143–172, 176–205, 209–238, 243–273, and 277–306; these read ISSEHFHRAVSVNDEDLLLRILEGGHVMIDV, FGFTALMVAAQKGYTRLVKILVSNGTDVNL, SGKDSLMLACYAGHLDVVKYLRRHGASWEA, GGCTALHWAADGGHCSVIDWMIKDGCEVDV, SGWTPLMRVSAVTGSQKVASLLIEAGADVNI, and DGKTPLMVAVLNNHEQLVQLLLDKGADATV.

As to quaternary structure, interacts with COPS5; regulates the phosphorylation of JUN and the transcriptional activity of AP-1. Interacts with RYBP; may prevent the ubiquitin-mediated proteasomal degradation of FANK1. Post-translationally, polyubiquitinated. Polyubiquitination leads to proteasomal degradation. Mostly restricted to testis (at protein level), including mid to late pachytene spermatocytes (stages VI-X), diplotene spermatocytes (stage XI), meiotically dividing spermatocytes (stage XII) and spermatids in steps 1-14. Highest levels in late pachytene spermatocytes and spermatids in steps 1-9.

Its subcellular location is the nucleus. The protein resides in the cytoplasm. It localises to the cytosol. It is found in the cytoskeleton. The protein localises to the cilium basal body. Its subcellular location is the cell projection. The protein resides in the cilium. Functionally, through the activation of JUN and AP-1-mediated transcription, may regulate apoptosis. This Mus musculus (Mouse) protein is Fibronectin type 3 and ankyrin repeat domains 1 protein.